The chain runs to 102 residues: NADH-quinone oxidoreductase subunit K (102 aa).

3 consecutive transmembrane segments (helical) span residues isoleucine 3–isoleucine 23, isoleucine 31–phenylalanine 51, and phenylalanine 66–phenylalanine 86.

The protein belongs to the complex I subunit 4L family. As to quaternary structure, NDH-1 is composed of 14 different subunits. Subunits NuoA, H, J, K, L, M, N constitute the membrane sector of the complex.

It localises to the cell inner membrane. It carries out the reaction a quinone + NADH + 5 H(+)(in) = a quinol + NAD(+) + 4 H(+)(out). Functionally, NDH-1 shuttles electrons from NADH, via FMN and iron-sulfur (Fe-S) centers, to quinones in the respiratory chain. The immediate electron acceptor for the enzyme in this species is believed to be ubiquinone. Couples the redox reaction to proton translocation (for every two electrons transferred, four hydrogen ions are translocated across the cytoplasmic membrane), and thus conserves the redox energy in a proton gradient. The polypeptide is NADH-quinone oxidoreductase subunit K (Rhodospirillum centenum (strain ATCC 51521 / SW)).